We begin with the raw amino-acid sequence, 229 residues long: MARLALSPVPSHWMVALLLLLSAEPVPAARSEDRYRNPKGSACSRIWQSPRFIARKRGFTVKMHCYMNSASGNVSWLWKQEMDENPQQLKLEKGRMEESQNESLATLTIQGIRFEDNGIYFCQQKCNNTSEVYQGCGTELRVMGFSTLAQLKQRNTLKDGIIMIQTLLIILFIIVPIFLLLDKDDSKAGMEEDHTYEGLDIDQTATYEDIVTLRTGEVKWSVGEHPGQE.

The signal sequence occupies residues 1–28; sequence MARLALSPVPSHWMVALLLLLSAEPVPA. Residues 29 to 159 are Extracellular-facing; it reads ARSEDRYRNP…QLKQRNTLKD (131 aa). The 101-residue stretch at 38–138 folds into the Ig-like V-type domain; sequence PKGSACSRIW…TSEVYQGCGT (101 aa). 2 disulfide bridges follow: C43–C126 and C65–C122. Residues N73, N101, N127, and N128 are each glycosylated (N-linked (GlcNAc...) asparagine). A helical membrane pass occupies residues 160-180; that stretch reads GIIMIQTLLIILFIIVPIFLL. Topologically, residues 181–229 are cytoplasmic; sequence LDKDDSKAGMEEDHTYEGLDIDQTATYEDIVTLRTGEVKWSVGEHPGQE. The ITAM domain occupies 185–213; it reads DSKAGMEEDHTYEGLDIDQTATYEDIVTL. Phosphotyrosine; by SRC-type Tyr-kinases is present on residues Y196 and Y207.

Heterodimer of alpha and beta chains; disulfide-linked. Part of the B-cell antigen receptor complex where the alpha/beta chain heterodimer is non-covalently associated with an antigen-specific membrane-bound surface immunoglobulin of two heavy chains and two light chains. Interacts with LYN. Phosphorylated on tyrosine upon B-cell activation by SRC-type Tyr-kinases such as BLK, LYN and SYK. As to expression, B-cells.

The protein resides in the cell membrane. In terms of biological role, required in cooperation with CD79A for initiation of the signal transduction cascade activated by the B-cell antigen receptor complex (BCR) which leads to internalization of the complex, trafficking to late endosomes and antigen presentation. Enhances phosphorylation of CD79A, possibly by recruiting kinases which phosphorylate CD79A or by recruiting proteins which bind to CD79A and protect it from dephosphorylation. The polypeptide is B-cell antigen receptor complex-associated protein beta chain (CD79B) (Homo sapiens (Human)).